The primary structure comprises 576 residues: MNIHALLVNRFTEALQEMGVENAPVPVSRSARPEFGEYQFNGAMALAKQLKQKPRDIAEKIVETVKLDDIASKLEVAGPGFINVHLNDAWLANQCELSLTDPRLGIAKSPEQNIVVDYSSPNLAKEMHVGHLRTTIIGDAVVKVLEFLGHNVIRQNHMGDWGTQFGMLLAHLSDKLQEEVAETALSDLEDFYREAKVRFDEEEGFADRAREYVVKLQGGDAQCLALWEKFIDVSITHSEEVYDKLNVSLTRKDIMGESAYNDDLANVISDLKTKGLAVEDQGAQVVFIPELADKEGNPAVYIVQKSGGGYLYATTDLAAMRYRSGKLNADRTLILTDARQALHFKQTEIVGRKAGFMKEEQTYEHCPFGMMLGSDGKPFKTRTGGTVKLVELLDEAVERAGKLIAERDNDLSEEELKEVARKVGIGAVKYADLSKNRTTDYMFNWDSMLSFEGNTAPYLQYAYTRVKSLFRKAGVDMATMPVDIKLVEKQEHALAVLLMQFEEVIGMVSREATPHVLCTYLYDVASAFMTFYEACPMLKEGIEPQVRDSRLALSALVAKTLEKGLTLLGIETLEKM.

Positions 121–131 (PNLAKEMHVGH) match the 'HIGH' region motif.

It belongs to the class-I aminoacyl-tRNA synthetase family. In terms of assembly, monomer.

Its subcellular location is the cytoplasm. It catalyses the reaction tRNA(Arg) + L-arginine + ATP = L-arginyl-tRNA(Arg) + AMP + diphosphate. This is Arginine--tRNA ligase from Alteromonas mediterranea (strain DSM 17117 / CIP 110805 / LMG 28347 / Deep ecotype).